The following is a 469-amino-acid chain: MSALTPPTDMPTPTTDKITQAAMETIYLCKFRVSMDGEWLCLRELDDISLTPDPEPTHEDPNYLMANERMNLMNMAKLSIKGLIESALNLGRTLDSDYAPLQQFFVVMEHCLKHGLKAKKTFLGQNKSFWGPLELVEKLVPEAAEITASVKDLPGLKTPVGRGRAWLRLALMQKKLSEYMKALINKKELLSEFYEPNALMMEEEGAIIAGLLVGLNVIDANFCMKGEDLDSQVGVIDFSMYLKDGNSSKGTEGDGQITAILDQKNYVEELNRHLNATVNNLQAKVDALEKSNTKLTGELAVANNRIITLQEEMERVKEESSYILESNRKGPKQDRTAEGQALSEARKHLKEETQLRLDVEKELEMQISMRQEMELAMKMLEKDVCEKQDALVSLRQQLDDLRALKHELAFKLQSSDLGVKQKSELNSRLEEKTNQMAATIKQLEQSEKDLVKQAKTLNSAANKLIPKHH.

Phosphothreonine occurs at positions 5 and 12. Phosphoserine occurs at positions 34 and 49. Position 51 is a phosphothreonine (threonine 51). Residues 95–227 (DSDYAPLQQF…IDANFCMKGE (133 aa)) form the RUN domain. Coiled-coil stretches lie at residues 271 to 362 (NRHL…VEKE) and 422 to 463 (KSEL…AANK).

As to quaternary structure, interacts with PAK1. Interacts (via C-terminus) with Ras-related Rab-5 proteins. Interacts (via C-terminus) with Ras-related Rap-2 proteins. Interacts with PIK3CA and PIK3R1. Interacts (via N-terminus) with FSCN1; this interaction induces neuron axon development. Interacts with DBN1. Interacts (via the second coiled coil) with GTP-, but not GDP-bound ARL8A and ARL8B. Interacts with dynactin/DCTN1 and the dynein intermediate chain DYNC1I1/2. Directly interacts with DYNC1LI1. Post-translationally, phosphorylated by PAK1.

It localises to the cytoplasm. The protein resides in the endomembrane system. Its subcellular location is the cell projection. The protein localises to the invadopodium. It is found in the growth cone. It localises to the perikaryon. The protein resides in the filopodium. Its subcellular location is the lamellipodium. The protein localises to the lysosome. ARL8 effector that promotes the coupling of endolysosomes to dynein-dynactin for retrograde transport along microtubules. Acts by binding both GTP-bound ARL8 and dynein-dynactin. In nonneuronal cells, promotes concentration of endolysosomes in the juxtanuclear area. In hippocampal neurons, drives retrograde transport of endolysosomes from the axon to the soma. Plays a role in the generation of neuronal polarity formation and axon growth. Implicated in the formation of a single axon by developing neurons. May inhibit the formation of additional axons by inhibition of PI3K in minor neuronal processes. Plays a role in the formation of F-actin-enriched protrusive structures at the cell periphery. Plays a role in cytoskeletal organization by regulating the subcellular localization of FSCN1 and DBN1 at axonal growth cones. The sequence is that of Protein RUFY3 from Pongo abelii (Sumatran orangutan).